The primary structure comprises 289 residues: Energy-coupling factor transporter ATP-binding protein EcfA2 (289 aa).

One can recognise an ABC transporter domain in the interval 3-246 (IQAKKLNYTY…PEWLKNHHLN (244 aa)). 40 to 47 (GHTGSGKS) lines the ATP pocket.

The protein belongs to the ABC transporter superfamily. Energy-coupling factor EcfA family. In terms of assembly, forms a stable energy-coupling factor (ECF) transporter complex composed of 2 membrane-embedded substrate-binding proteins (S component), 2 ATP-binding proteins (A component) and 2 transmembrane proteins (T component).

It localises to the cell membrane. Functionally, ATP-binding (A) component of a common energy-coupling factor (ECF) ABC-transporter complex. Unlike classic ABC transporters this ECF transporter provides the energy necessary to transport a number of different substrates. This is Energy-coupling factor transporter ATP-binding protein EcfA2 from Ligilactobacillus salivarius (strain UCC118) (Lactobacillus salivarius).